A 184-amino-acid polypeptide reads, in one-letter code: MLGPPVNLPKWLEENSHLLKPPINNYCVYNDDFTVMIVGGPNARTDYHINQTPEWFYQYKGAMMLKVVDDGVFRDIIIREGDMFLLPGNTPHNPVRFADTVGVVLEQRRPEGSIDRMRWYCQNPDCTPGQVVHEASFHCTDLGTQIKAGVESFKTDESLRKCGKCGELADWCPKPGSILDPNKA.

Arginine 44 contributes to the O2 binding site. Positions 48, 54, and 92 each coordinate Fe cation. Position 54 (glutamate 54) interacts with substrate. Substrate contacts are provided by arginine 96 and glutamate 106. 4 residues coordinate a divalent metal cation: cysteine 121, cysteine 126, cysteine 162, and cysteine 165.

The protein belongs to the 3-HAO family. Requires Fe(2+) as cofactor.

Its subcellular location is the cytoplasm. It catalyses the reaction 3-hydroxyanthranilate + O2 = (2Z,4Z)-2-amino-3-carboxymuconate 6-semialdehyde. It functions in the pathway cofactor biosynthesis; NAD(+) biosynthesis; quinolinate from L-kynurenine: step 3/3. In terms of biological role, catalyzes the oxidative ring opening of 3-hydroxyanthranilate to 2-amino-3-carboxymuconate semialdehyde, which spontaneously cyclizes to quinolinate. The protein is 3-hydroxyanthranilate 3,4-dioxygenase of Pyricularia oryzae (strain 70-15 / ATCC MYA-4617 / FGSC 8958) (Rice blast fungus).